Here is a 709-residue protein sequence, read N- to C-terminus: Phosphoribosylformylglycinamidine synthase subunit PurL (709 aa).

H36 is a catalytic residue. Y39 and K80 together coordinate ATP. E82 lines the Mg(2+) pocket. Substrate-binding positions include 83–86 and R105; that span reads SHNH. The active-site Proton acceptor is the H84. Residue D106 participates in Mg(2+) binding. Residue Q226 coordinates substrate. D252 contacts Mg(2+). 294–296 is a substrate binding site; sequence ETQ. 2 residues coordinate ATP: D470 and G507. Position 510 (S510) interacts with substrate.

This sequence belongs to the FGAMS family. As to quaternary structure, monomer. Part of the FGAM synthase complex composed of 1 PurL, 1 PurQ and 2 PurS subunits.

The protein localises to the cytoplasm. It catalyses the reaction N(2)-formyl-N(1)-(5-phospho-beta-D-ribosyl)glycinamide + L-glutamine + ATP + H2O = 2-formamido-N(1)-(5-O-phospho-beta-D-ribosyl)acetamidine + L-glutamate + ADP + phosphate + H(+). The protein operates within purine metabolism; IMP biosynthesis via de novo pathway; 5-amino-1-(5-phospho-D-ribosyl)imidazole from N(2)-formyl-N(1)-(5-phospho-D-ribosyl)glycinamide: step 1/2. Its function is as follows. Part of the phosphoribosylformylglycinamidine synthase complex involved in the purines biosynthetic pathway. Catalyzes the ATP-dependent conversion of formylglycinamide ribonucleotide (FGAR) and glutamine to yield formylglycinamidine ribonucleotide (FGAM) and glutamate. The FGAM synthase complex is composed of three subunits. PurQ produces an ammonia molecule by converting glutamine to glutamate. PurL transfers the ammonia molecule to FGAR to form FGAM in an ATP-dependent manner. PurS interacts with PurQ and PurL and is thought to assist in the transfer of the ammonia molecule from PurQ to PurL. The sequence is that of Phosphoribosylformylglycinamidine synthase subunit PurL from Saccharolobus islandicus (strain M.14.25 / Kamchatka #1) (Sulfolobus islandicus).